The chain runs to 252 residues: Adenosylcobinamide-GDP ribazoletransferase (252 aa).

Transmembrane regions (helical) follow at residues 33-53 (FISP…VVLL), 105-125 (TGSG…IATL), 132-152 (LWFF…LLGL), 184-204 (FAIL…LLVF), and 215-235 (MSGD…LLVA).

The protein belongs to the CobS family. Mg(2+) is required as a cofactor.

The protein resides in the cell membrane. It carries out the reaction alpha-ribazole + adenosylcob(III)inamide-GDP = adenosylcob(III)alamin + GMP + H(+). The enzyme catalyses alpha-ribazole 5'-phosphate + adenosylcob(III)inamide-GDP = adenosylcob(III)alamin 5'-phosphate + GMP + H(+). It participates in cofactor biosynthesis; adenosylcobalamin biosynthesis; adenosylcobalamin from cob(II)yrinate a,c-diamide: step 7/7. In terms of biological role, joins adenosylcobinamide-GDP and alpha-ribazole to generate adenosylcobalamin (Ado-cobalamin). Also synthesizes adenosylcobalamin 5'-phosphate from adenosylcobinamide-GDP and alpha-ribazole 5'-phosphate. This chain is Adenosylcobinamide-GDP ribazoletransferase, found in Sulfolobus acidocaldarius (strain ATCC 33909 / DSM 639 / JCM 8929 / NBRC 15157 / NCIMB 11770).